A 160-amino-acid chain; its full sequence is MLQIIRGKLVIFLITLCLFVVYLGFDNNSNSDIVFYGHKTPKSVEIYLSEKNIIYKIINDQKISRGNGHFISIMVNNYRTHCGVVDINLNFFNDILYSVRLKNISKLENMEFCATKQRVYFSDKNKKASYKIINYGDYYDVDYYDNNLKNEVFDWIGKWS.

This is an uncharacterized protein from Escherichia coli (strain K12).